The following is a 371-amino-acid chain: Glycosyltransferase 8 domain-containing protein 1 (371 aa).

Residues 1–7 (MSFRKVN) lie on the Cytoplasmic side of the membrane. A helical; Signal-anchor for type II membrane protein transmembrane segment spans residues 8–28 (IIIWVLAVVLFLLVLHHNFLS). Residues 29–371 (LSSLLKNDIS…RRHMDTSNIK (343 aa)) lie on the Lumenal side of the membrane. Asn257 carries N-linked (GlcNAc...) asparagine glycosylation.

This sequence belongs to the glycosyltransferase 8 family.

The protein resides in the membrane. The polypeptide is Glycosyltransferase 8 domain-containing protein 1 (Glt8d1) (Mus musculus (Mouse)).